The sequence spans 255 residues: Sec-independent protein translocase protein TatC (255 aa).

Transmembrane regions (helical) follow at residues 28-48 (VAAV…IYAL), 56-76 (YLPE…LAPF), 80-100 (LMIS…GFIA), 121-141 (LFYA…FGFF), 165-185 (LFFA…LIWV), 195-212 (NSRP…MVLT), and 216-236 (VFSQ…GVFF).

The protein belongs to the TatC family. As to quaternary structure, the Tat system comprises two distinct complexes: a TatABC complex, containing multiple copies of TatA, TatB and TatC subunits, and a separate TatA complex, containing only TatA subunits. Substrates initially bind to the TatABC complex, which probably triggers association of the separate TatA complex to form the active translocon.

It localises to the cell membrane. Its function is as follows. Part of the twin-arginine translocation (Tat) system that transports large folded proteins containing a characteristic twin-arginine motif in their signal peptide across membranes. Together with TatB, TatC is part of a receptor directly interacting with Tat signal peptides. The sequence is that of Sec-independent protein translocase protein TatC from Azotobacter chroococcum mcd 1.